A 311-amino-acid chain; its full sequence is Malate dehydrogenase (311 aa).

NAD(+) is bound by residues 7 to 13 and D34; that span reads GAAGGIG. Residues R81 and R87 each coordinate substrate. NAD(+) contacts are provided by residues N94 and 117–119; that span reads ITN. N119 and R153 together coordinate substrate. The Proton acceptor role is filled by H177. M227 provides a ligand contact to NAD(+).

The protein belongs to the LDH/MDH superfamily. MDH type 1 family. Homodimer.

It catalyses the reaction (S)-malate + NAD(+) = oxaloacetate + NADH + H(+). Catalyzes the reversible oxidation of malate to oxaloacetate. In Erwinia tasmaniensis (strain DSM 17950 / CFBP 7177 / CIP 109463 / NCPPB 4357 / Et1/99), this protein is Malate dehydrogenase.